A 103-amino-acid chain; its full sequence is Large ribosomal subunit protein uL24 (103 aa).

This sequence belongs to the universal ribosomal protein uL24 family. As to quaternary structure, part of the 50S ribosomal subunit.

In terms of biological role, one of two assembly initiator proteins, it binds directly to the 5'-end of the 23S rRNA, where it nucleates assembly of the 50S subunit. Its function is as follows. One of the proteins that surrounds the polypeptide exit tunnel on the outside of the subunit. The chain is Large ribosomal subunit protein uL24 from Brucella abortus (strain S19).